We begin with the raw amino-acid sequence, 297 residues long: Nucleotide-binding protein BMA10229_A1510 (297 aa).

8-15 (GISGSGKS) provides a ligand contact to ATP. Position 57–60 (57–60 (DARS)) interacts with GTP.

It belongs to the RapZ-like family.

Its function is as follows. Displays ATPase and GTPase activities. The sequence is that of Nucleotide-binding protein BMA10229_A1510 from Burkholderia mallei (strain NCTC 10229).